A 252-amino-acid chain; its full sequence is 5-oxoprolinase subunit A (252 aa).

It belongs to the LamB/PxpA family. As to quaternary structure, forms a complex composed of PxpA, PxpB and PxpC.

It carries out the reaction 5-oxo-L-proline + ATP + 2 H2O = L-glutamate + ADP + phosphate + H(+). Catalyzes the cleavage of 5-oxoproline to form L-glutamate coupled to the hydrolysis of ATP to ADP and inorganic phosphate. The sequence is that of 5-oxoprolinase subunit A from Mycobacterium avium (strain 104).